We begin with the raw amino-acid sequence, 182 residues long: Transmembrane and coiled-coil domain-containing protein 2 (182 aa).

2 helical membrane-spanning segments follow: residues 10 to 30 and 50 to 70; these read IIID…TLLG and VQVI…YALW. Positions 122–149 form a coiled coil; that stretch reads GLQEKILKKLQTVENKVKDLEGMIISQK.

It localises to the membrane. The protein is Transmembrane and coiled-coil domain-containing protein 2 (TMCO2) of Bos taurus (Bovine).